A 1674-amino-acid chain; its full sequence is MSSRRKRAPPMKVDEERQQQLHWNMHEDLRSEPLTMTVGEQACSDADSSSDCIIIDEGPPESALHRDKKRRSETVSVLEATEEETRLSVTLNVTVSPYRVDNSWKAFLGDFALQLLPKESLVEHFSERTFTLSPSESSSQFLIYVHSECKNVEKQENVLEGSAGVCSKGIRVESSFSSDMLQDLAWLQKRRGIKLYQRPDGTHTIKVGIYILEAGLTRLDFMSDAGSRMKKFNQLMKRVMEKLHNFIIPDVLEEEEEGSESEPEGQDIDELYHFVKQTHQQETRSVQVDVQHPALIPVLRPYQREAVNWMLQQEQFRSAPPADNSLHFLWREIVTPDGLKLYYNPYTGCIIRDFPHAGPQLLGGILADEMGLGKTVEVLALILTHTRQDVKQDALTLPEGKVVNYFIPTHCPREKVKNREIQDTEYEPKEKVHCPPTRVMILTAVKEMNGKKGVSILSIYKYVSSIFRYDVQRNRGLLKRMLKCLIFEGLVKQIKGHGFSGTFTLGKNYKEDVFDKTKKQAVGSPRKIEKELRKSVNKDADSEYLPSNTSDDDEPYYYYCKAGKSRSKLKKPALLTKKGKGQSVHLDSQGDAPAAGVCASTDVHVSENTCVSEDKQTQEAKDCAESPNPAAEELAQSNTSSPCETSDYRFECICGEFDQIGHKPRVQCLKCHLWQHAKCVNYEEKNLKVKPFYCPHCLVAMEPVSTRATLIISPSSICHQWVDEINRHVRSSSLRVLVYQGVKKHGFLQPHFLAEQDIVIITYDVLRSELNYVNIPHSNSEDGRRLRNQKRYMAIPSPLVAVEWWRICLDEAQMVECPTVKAAEMAQRLSGINRWCISGTPVQRGLEDLFGLVVFLGIEPYCVKHWWIRLLYHPYCKKNPQHLYSFIAKIMWRSAKKDVIDQIQIPPQTEEMHWLHFSPVERHFYHRQHEVCCQDAIVKLRKISDWALKLSSLDRRTVSSILYPLLRLRQACCHPQAVRGEFLPLQKSTMTMEELLTSLQKKCGTECEEAHRQLVCALNGLAGIHIIKGEYALAAELYREVLRSSEEHKGKLKTDSLQRLHATHNLMELLGAKHPGIPPTLRDGRLEEEAKQLREHYMSKCNTEVAEAQQALQPVQQSIRELQRKIHSNSPWWLNVIHRAMEFSVDEELVQRVRNEISSNYKQQTDKLSMSEKFRDCRGLQFLLTTQMEELHKFQKLVREAVKKLEKPPSREVIESATVCHLRPARLPLNCCVFCKADELFTEYESKLFFNTVKGQTAIFEEMIEDEEGLVDDRVPTTTRGLWAVSETERSMKAILSFARSHRFDVEYVDEGSVSMDLFEAWKKEYKLLHEYWMTLRNRVSAVDELAMATERLRVRHPKEPKPNPPVHHIIEPHEVEQNRIKLVNDKAVATSQLQKKLGQLLYLTNLEKSQDKTSGGINPEPCPICARQLGKQWAVLTCGHCFCNECTSIIIEQYSVGSHRSSIKCAICRQTTSHKEVSYVFTSEKANQEDDIPVKGSHSTKVEAVVRTLMKIQLRDPGAKALVFSTWQDVLDIISKALTDNNMEFTQISRIKTFQENLSAFKYDPHINILLLPLHTGSNGLTIIEATHVLLVEPILNPAHELQAIGRVHRIGQTKPTIVHRFLIKATIEERMQAMLKTAERSHTSSSGKHSEASVLTVAGLADLFTKENEELE.

The segment at 1-26 (MSSRRKRAPPMKVDEERQQQLHWNMH) is disordered. Residues 12–26 (KVDEERQQQLHWNMH) are compositionally biased toward basic and acidic residues. Residues S259 and S261 each carry the phosphoserine modification. A Helicase ATP-binding; first part domain is found at 302-384 (YQREAVNWML…TVEVLALILT (83 aa)). 368-375 (DEMGLGKT) is a binding site for ATP. The H15 domain occupies 433–507 (HCPPTRVMIL…GFSGTFTLGK (75 aa)). A disordered region spans residues 524 to 548 (SPRKIEKELRKSVNKDADSEYLPSN). A compositionally biased stretch (basic and acidic residues) spans 526-541 (RKIEKELRKSVNKDAD). Residue S626 is modified to Phosphoserine. Residues 649 to 700 (RFECICGEFDQIGHKPRVQCLKCHLWQHAKCVNYEEKNLKVKPFYCPHCLVA) form a PHD-type zinc finger. The Helicase ATP-binding; second part domain maps to 701–859 (MEPVSTRATL…FGLVVFLGIE (159 aa)). The DEAQ box motif lies at 810 to 813 (DEAQ). Residues 1423 to 1470 (CPICARQLGKQWAVLTCGHCFCNECTSIIIEQYSVGSHRSSIKCAICR) form an RING-type zinc finger. The Helicase C-terminal domain maps to 1505 to 1663 (AVVRTLMKIQ…ASVLTVAGLA (159 aa)).

The protein belongs to the SNF2/RAD54 helicase family. As to quaternary structure, homodimer. Interacts with HLTF, PCNA, UBE2N and RAD18. As to expression, broadly expressed (at protein level).

It catalyses the reaction S-ubiquitinyl-[E2 ubiquitin-conjugating enzyme]-L-cysteine + [acceptor protein]-L-lysine = [E2 ubiquitin-conjugating enzyme]-L-cysteine + N(6)-ubiquitinyl-[acceptor protein]-L-lysine.. It participates in protein modification; protein ubiquitination. Its function is as follows. E3 ubiquitin-protein ligase involved in DNA repair. Upon genotoxic stress, accepts ubiquitin from the UBE2N-UBE2V2 E2 complex and transfers it to 'Lys-164' of PCNA which had been monoubiquitinated by UBE2A/B-RAD18, promoting the formation of non-canonical poly-ubiquitin chains linked through 'Lys-63'. This chain is E3 ubiquitin-protein ligase SHPRH (Shprh), found in Mus musculus (Mouse).